The chain runs to 160 residues: Non-secretory ribonuclease (160 aa).

Positions methionine 1–alanine 27 are cleaved as a signal peptide. Residue tryptophan 34 is glycosylated (C-linked (Man) tryptophan). Residue histidine 42 is the Proton acceptor of the active site. An N-linked (GlcNAc...) asparagine glycan is attached at asparagine 44. 4 disulfide bridges follow: cysteine 50-cysteine 110, cysteine 64-cysteine 122, cysteine 82-cysteine 137, and cysteine 89-cysteine 98. Position 60 is a 3'-nitrotyrosine (tyrosine 60). Lysine 65–threonine 69 is a binding site for substrate. N-linked (GlcNAc...) asparagine glycosylation is found at asparagine 92, asparagine 111, and asparagine 138. The active-site Proton donor is histidine 155.

This sequence belongs to the pancreatic ribonuclease family. Interacts with and forms a tight 1:1 complex with RNH1. Dimerization of two such complexes may occur.

The protein resides in the lysosome. The protein localises to the cytoplasmic granule. The catalysed reaction is an [RNA] containing cytidine + H2O = an [RNA]-3'-cytidine-3'-phosphate + a 5'-hydroxy-ribonucleotide-3'-[RNA].. The enzyme catalyses an [RNA] containing uridine + H2O = an [RNA]-3'-uridine-3'-phosphate + a 5'-hydroxy-ribonucleotide-3'-[RNA].. Functionally, this is a non-secretory ribonuclease. It is a pyrimidine specific nuclease with a slight preference for U. Cytotoxin and helminthotoxin. Possesses a wide variety of biological activities. The chain is Non-secretory ribonuclease (RNASE2) from Macaca fascicularis (Crab-eating macaque).